The following is a 312-amino-acid chain: Glyoxylate/hydroxypyruvate reductase A (312 aa).

Residue Arg-227 is part of the active site. The active-site Proton donor is His-275.

This sequence belongs to the D-isomer specific 2-hydroxyacid dehydrogenase family. GhrA subfamily.

Its subcellular location is the cytoplasm. The enzyme catalyses glycolate + NADP(+) = glyoxylate + NADPH + H(+). The catalysed reaction is (R)-glycerate + NAD(+) = 3-hydroxypyruvate + NADH + H(+). It carries out the reaction (R)-glycerate + NADP(+) = 3-hydroxypyruvate + NADPH + H(+). Its function is as follows. Catalyzes the NADPH-dependent reduction of glyoxylate and hydroxypyruvate into glycolate and glycerate, respectively. The chain is Glyoxylate/hydroxypyruvate reductase A from Salmonella enteritidis PT4 (strain P125109).